Consider the following 1032-residue polypeptide: MVLRRRTLHPLSLLVQAAVLAETLALGTLPAFLPCELKPHGLVDCNWLFLKSVPRFSAAASCSNITRLSLISNRIHHLHNSDFVHLSNLRQLNLKWNCPPTGLSPLHFSCHMTIEPRTFLAMRTLEELNLSYNGITTVPRLPSSLVNLSLSHTNILVLDANSLAGLYSLRVLFMDGNCYYKNPCTGAVKVTPGALLGLSNLTHLSLKYNNLTKVPRQLPPSLEYLLVSYNLIVKLGPEDLANLTSLRVLDVGGNCRRCDHAPNPCIECGQKSLHLHPETFHHLSHLEGLVLKDSSLHTLNSSWFQGLVNLSVLDLSENFLYESITHTNAFQNLTRLRKLNLSFNYRKKVSFARLHLASSFKNLVSLQELNMNGIFFRLLNKYTLRWLADLPKLHTLHLQMNFINQAQLSIFGTFRALRFVDLSDNRISGPSTLSEATPEEADDAEQEELLSADPHPAPLSTPASKNFMDRCKNFKFTMDLSRNNLVTIKPEMFVNLSRLQCLSLSHNSIAQAVNGSQFLPLTNLQVLDLSHNKLDLYHWKSFSELPQLQALDLSYNSQPFSMKGIGHNFSFVTHLSMLQSLSLAHNDIHTRVSSHLNSNSVRFLDFSGNGMGRMWDEGGLYLHFFQGLSGLLKLDLSQNNLHILRPQNLDNLPKSLKLLSLRDNYLSFFNWTSLSFLPNLEVLDLAGNQLKALTNGTLPNGTLLQKLDVSSNSIVSVVPAFFALAVELKEVNLSHNILKTVDRSWFGPIVMNLTVLDVRSNPLHCACGAAFVDLLLEVQTKVPGLANGVKCGSPGQLQGRSIFAQDLRLCLDEVLSWDCFGLSLLAVAVGMVVPILHHLCGWDVWYCFHLCLAWLPLLARSRRSAQTLPYDAFVVFDKAQSAVADWVYNELRVRLEERRGRRALRLCLEDRDWLPGQTLFENLWASIYGSRKTLFVLAHTDRVSGLLRTSFLLAQQRLLEDRKDVVVLVILRPDAHRSRYVRLRQRLCRQSVLFWPQQPNGQGGFWAQLSTALTRDNRHFYNQNFCRGPTAE.

A signal peptide spans 1 to 25; it reads MVLRRRTLHPLSLLVQAAVLAETLA. At 26–818 the chain is on the extracellular side; that stretch reads LGTLPAFLPC…LCLDEVLSWD (793 aa). A disulfide bridge connects residues Cys-35 and Cys-45. 47 to 51 lines the DNA pocket; it reads WLFLK. 26 LRR repeats span residues 62–85, 87–110, 122–147, 150–166, 167–190, 198–221, 223–242, 243–268, 283–306, 308–332, 333–356, 363–386, 390–413, 415–440, 471–495, 497–520, 521–544, 546–573, 575–599, 601–623, 628–651, 653–676, 677–700, 702–724, 725–748, and 750–773; these read CSNITRLSLISNRIHHLHNSDFVH, SNLRQLNLKWNCPPTGLSPLHFSC, MRTLEELNLSYNGITTVPRLPSSLVN, LSHTNILVLDANSLAGL, YSLRVLFMDGNCYYKNPCTGAVKV, LSNLTHLSLKYNNLTKVPRQLPPS, EYLLVSYNLIVKLGPEDLAN, LTSLRVLDVGGNCRRCDHAPNPCIEC, LSHLEGLVLKDSSLHTLNSSWFQG, VNLSVLDLSENFLYESITHTNAFQN, LTRLRKLNLSFNYRKKVSFARLHL, LVSLQELNMNGIFFRLLNKYTLRW, LPKLHTLHLQMNFINQAQLSIFGT, RALRFVDLSDNRISGPSTLSEATPEE, CKNFKFTMDLSRNNLVTIKPEMFVN, SRLQCLSLSHNSIAQAVNGSQFLP, LTNLQVLDLSHNKLDLYHWKSFSE, PQLQALDLSYNSQPFSMKGIGHNFSFVT, LSMLQSLSLAHNDIHTRVSSHLNSN, VRFLDFSGNGMGRMWDEGGLYLH, LSGLLKLDLSQNNLHILRPQNLDN, PKSLKLLSLRDNYLSFFNWTSLSF, LPNLEVLDLAGNQLKALTNGTLPN, TLLQKLDVSSNSIVSVVPAFFAL, AVELKEVNLSHNILKTVDRSWFGP, and VMNLTVLDVRSNPLHCACGAAFVD. Asn-64 carries an N-linked (GlcNAc...) asparagine glycan. DNA contacts are provided by residues 72–77 and 95–109; these read SNRIHH and KWNCPPTGLSPLHFS. A disulfide bridge links Cys-98 with Cys-110. N-linked (GlcNAc...) asparagine glycosylation is present at Asn-129. Position 132 (Tyr-132) interacts with DNA. An N-linked (GlcNAc...) asparagine glycan is attached at Asn-147. A disulfide bridge links Cys-178 with Cys-184. 179–181 lines the DNA pocket; it reads YYK. Asn-200 is a glycosylation site (N-linked (GlcNAc...) asparagine). DNA is bound at residue Tyr-208. 2 N-linked (GlcNAc...) asparagine glycosylation sites follow: Asn-210 and Asn-242. Disulfide bonds link Cys-255/Cys-268 and Cys-258/Cys-265. 2 S-palmitoyl cysteine lipidation sites follow: Cys-258 and Cys-265. N-linked (GlcNAc...) asparagine glycans are attached at residues Asn-300, Asn-309, Asn-332, and Asn-340. The segment at 430–462 is disordered; sequence PSTLSEATPEEADDAEQEELLSADPHPAPLSTP. Acidic residues predominate over residues 437–450; sequence TPEEADDAEQEELL. Cys-471 and Cys-501 form a disulfide bridge. N-linked (GlcNAc...) asparagine glycans are attached at residues Asn-495 and Asn-514. A glycan (N-linked (GlcNAc...) asparagine) is linked at Asn-568. 3 N-linked (GlcNAc...) asparagine glycosylation sites follow: Asn-670, Asn-695, and Asn-700. N-linked (GlcNAc...) asparagine glycosylation is found at Asn-732 and Asn-752. 2 disulfide bridges follow: Cys-765-Cys-791 and Cys-767-Cys-810. The helical transmembrane segment at 819-839 threads the bilayer; it reads CFGLSLLAVAVGMVVPILHHL. Residues 840–1032 lie on the Cytoplasmic side of the membrane; it reads CGWDVWYCFH…QNFCRGPTAE (193 aa). The region spanning 868–1013 is the TIR domain; it reads LPYDAFVVFD…GFWAQLSTAL (146 aa).

Belongs to the Toll-like receptor family. As to quaternary structure, monomer and homodimer. Exists as a monomer in the absence of unmethylated cytidine-phosphate-guanosine (CpG) ligand. Proteolytic processing of an insertion loop (Z-loop) is required for homodimerization upon binding to the unmethylated CpG ligand leading to its activation. Interacts with MYD88 via their respective TIR domains. Interacts with BTK. Interacts (via transmembrane domain) with UNC93B1. Interacts with CD300LH; the interaction may promote full activation of TLR9-triggered innate responses. Interacts with CNPY3 and HSP90B1; this interaction is required for proper folding in the endoplasmic reticulum. Interacts with SMPDL3B. Interacts with CD82; this interaction is essential for TLR9-dependent myddosome formation in response to CpG stimulation. Post-translationally, activated by proteolytic cleavage of the flexible loop between repeats LRR14 and LRR15 within the ectodomain. Cleavage requires UNC93B1. Proteolytically processed by first removing the majority of the ectodomain by either asparagine endopeptidase (AEP) or a cathepsin followed by a trimming event that is solely cathepsin mediated and required for optimal receptor signaling. Palmitoylated by ZDHHC3 in the Golgi regulates TLR9 trafficking from the Golgi to endosomes. Depalmitoylation by PPT1 controls the release of TLR9 from UNC93B1 in endosomes. In terms of tissue distribution, expressed in the basolateral region of gastric epithelial cells with high levels detected in antrum and body mucosa (at protein level). Detected in spleen and stomach at higher levels in C57BL/6 mice than BALB/C.

Its subcellular location is the endoplasmic reticulum membrane. It is found in the endosome. It localises to the lysosome. The protein localises to the cytoplasmic vesicle. The protein resides in the phagosome. Its function is as follows. Key component of innate and adaptive immunity. TLRs (Toll-like receptors) control host immune response against pathogens through recognition of molecular patterns specific to microorganisms. TLR9 is a nucleotide-sensing TLR which is activated by unmethylated cytidine-phosphate-guanosine (CpG) dinucleotides. Acts via MYD88 and TRAF6, leading to NF-kappa-B activation, cytokine secretion and the inflammatory response. Plays a role in defense against systemic mouse cytomegalovirus infection. Controls lymphocyte response to Helicobacter infection. Upon CpG stimulation, induces B-cell proliferation, activation, survival and antibody production. The polypeptide is Toll-like receptor 9 (Tlr9) (Mus musculus (Mouse)).